A 362-amino-acid chain; its full sequence is Molybdenum import ATP-binding protein ModC (362 aa).

The region spanning 2 to 236 (ASPIEVRLHM…LDLPLAMGGD (235 aa)) is the ABC transporter domain. 34–41 (GPSGSGKT) serves as a coordination point for ATP. Residues 297–362 (QSSILNRLPV…AQIKAVAVLA (66 aa)) enclose the Mop domain.

Belongs to the ABC transporter superfamily. Molybdate importer (TC 3.A.1.8) family. In terms of assembly, the complex is composed of two ATP-binding proteins (ModC), two transmembrane proteins (ModB) and a solute-binding protein (ModA).

It is found in the cell inner membrane. The catalysed reaction is molybdate(out) + ATP + H2O = molybdate(in) + ADP + phosphate + H(+). Part of the ABC transporter complex ModABC involved in molybdenum import. Responsible for energy coupling to the transport system. This is Molybdenum import ATP-binding protein ModC from Pseudomonas savastanoi pv. phaseolicola (strain 1448A / Race 6) (Pseudomonas syringae pv. phaseolicola (strain 1448A / Race 6)).